A 428-amino-acid polypeptide reads, in one-letter code: Divalent metal cation transporter MntH (428 aa).

11 helical membrane-spanning segments follow: residues 33–53, 60–80, 114–134, 136–156, 171–191, 210–230, 258–278, 299–319, 334–356, 365–385, and 406–426; these read WYLL…GNVA, AQFG…AALV, QAEI…AIAL, IMFN…SLLL, VITA…FVVT, SVLL…VYLH, VGLA…VAAL, TLGA…GLAS, LLHW…LAIL, TLVL…LPLV, and VGWV…YLTV.

This sequence belongs to the NRAMP family.

It is found in the cell membrane. Functionally, h(+)-stimulated, divalent metal cation uptake system. Transports zinc and iron. Can also interact with manganese and copper. This is Divalent metal cation transporter MntH from Mycobacterium tuberculosis (strain CDC 1551 / Oshkosh).